The chain runs to 325 residues: DNA repair and recombination protein RadA (325 aa).

An ATP-binding site is contributed by 107–114 (GEFGSGKT).

It belongs to the eukaryotic RecA-like protein family.

In terms of biological role, involved in DNA repair and in homologous recombination. Binds and assemble on single-stranded DNA to form a nucleoprotein filament. Hydrolyzes ATP in a ssDNA-dependent manner and promotes DNA strand exchange between homologous DNA molecules. The chain is DNA repair and recombination protein RadA from Methanosarcina acetivorans (strain ATCC 35395 / DSM 2834 / JCM 12185 / C2A).